The following is a 287-amino-acid chain: MKDWEQKKVASPNQPPPAALEEAKISGTCGSPRTSPEPHDPGGSQPLTPRMESHSEEEDRPGAGGGLGWNGRSPRTQSLGACSAEAMLARKKHRRRPSKRKRHWRPYLELSWAEKQQRDERQSQRASRVREEMFAKGQPVAPYNTTQFLMNDRDPEEPNLVPQGASHPGSSGESEAGDSDGQGRARGEFQQKDFSEAYERYHTESLQGRSKEELVRDYLDLERRLSQAEEEMRRLRQLRGCTNWRPCYQVEELAAEVERLRTENQRLRQENEMWNREGGRRGGQPGS.

2 disordered regions span residues 1 to 212 (MKDW…RSKE) and 266 to 287 (RLRQ…QPGS). Residue Ser-31 is modified to Phosphoserine. Thr-34 and Thr-48 each carry phosphothreonine. Phosphoserine is present on residues Ser-53, Ser-55, Ser-73, Ser-78, and Ser-83. A compositionally biased stretch (basic residues) spans 89–105 (ARKKHRRRPSKRKRHWR). Residues 115 to 134 (KQQRDERQSQRASRVREEMF) show a composition bias toward basic and acidic residues. The segment at 142–145 (PYNT) is interaction with P-TEFb. Composition is skewed to basic and acidic residues over residues 181–212 (GQGR…RSKE) and 266–280 (RLRQ…EGGR). Residues 208–278 (GRSKEELVRD…QENEMWNREG (71 aa)) adopt a coiled-coil conformation. The tract at residues 227 to 287 (QAEEEMRRLR…GGRRGGQPGS (61 aa)) is interaction with CCNT1, HEXIM1 and HEXIM2.

This sequence belongs to the HEXIM family. As to quaternary structure, homooligomer and heterooligomer with HEXIM1; probably dimeric. Core component of the 7SK RNP complex, at least composed of 7SK RNA, LARP7, MEPCE, HEXIM1 (or HEXIM2) and P-TEFb (composed of CDK9 and CCNT1/cyclin-T1). Interacts with CCNT2.

The protein resides in the nucleus. In terms of biological role, transcriptional regulator which functions as a general RNA polymerase II transcription inhibitor. Core component of the 7SK RNP complex: in cooperation with 7SK snRNA sequesters P-TEFb in a large inactive 7SK snRNP complex preventing RNA polymerase II phosphorylation and subsequent transcriptional elongation. This chain is Protein HEXIM2 (HEXIM2), found in Bos taurus (Bovine).